The chain runs to 359 residues: Mitochondrial glutathione transporter SLC25A39 (359 aa).

Over 1-14 (MDDQDPGGISPLQQ) the chain is Mitochondrial intermembrane. Solcar repeat units lie at residues 9-151 (ISPL…LKAF), 159-243 (SDLY…VKSW), and 253-347 (TSVG…GKSF). The helical transmembrane segment at 15–35 (MVASGAGAVVTSLFMTPLDVV) threads the bilayer. Residues 36 to 121 (KVRLQSQRPS…VKIVRHEGTR (86 aa)) are Mitochondrial matrix-facing. Cys-74, Cys-78, Cys-88, and Cys-94 together coordinate [2Fe-2S] cluster. A helical transmembrane segment spans residues 122 to 142 (TLWSGLPATLVMTVPATAIYF). The Mitochondrial intermembrane portion of the chain corresponds to 143–164 (TAYDQLKAFLCGQSLTSDLYAP). A helical membrane pass occupies residues 165–185 (MVAGALARMGTVTVVSPLELV). The Mitochondrial matrix segment spans residues 186–214 (RTKLQAQHVSYRELASSVQAAVTQGGWRS). Residues 215–235 (LWLGWGPTALRDVPFSALYWF) form a helical membrane-spanning segment. Residues 236–255 (NYELVKSWLSGLRPKDQTSV) lie on the Mitochondrial intermembrane side of the membrane. Residues 256–276 (GISFVAGGISGMVAATLTLPF) traverse the membrane as a helical segment. Topologically, residues 277 to 317 (DVVKTQRQMSLGAVEAVRVKPPRVDSTWLLLRRIRAESGTR) are mitochondrial matrix. Residues 318–338 (GLFAGFLPRIIKAAPSCAIMI) form a helical membrane-spanning segment. Over 339 to 359 (STYEFGKSFFQRLNQEQPLGR) the chain is Mitochondrial intermembrane.

This sequence belongs to the mitochondrial carrier (TC 2.A.29) family. Cleaved and degraded by AFG3L2; degradation by AFG3L2 is regulated by the ability of SLC25A39 to bind iron-sulfur. In absence of mitochondrial glutathione, SLC25A39 binds iron-sulfur, preventing cleavage and degradation by AFG3L2. The presence of mitochondrial glutathione prevents iron-sulfur-binding to SLC25A39, promoting cleavage and degradation by AFG3L2. As to expression, abundant expression in bone marrow, spleen, testis and kidney.

Its subcellular location is the mitochondrion inner membrane. It catalyses the reaction glutathione(in) = glutathione(out). With respect to regulation, the activity of SLC25A39 is regulated by levels of mitochondrial glutathione via its ability to bind [2Fe-2S] iron-sulfur cluster. Upon physiological levels of mitochondrial glutathione, glutathione prevents iron-sulfur-binding to SLC25A39 promoting cleavage and degradation by AFG3L2. Upon depletion of mitochondrial glutathione, SLC25A39 binds iron-sulfur, preventing cleavage and degradation by AFG3L2. Functionally, mitochondrial transporter required for glutathione import into mitochondria. Glutathione, which plays key roles in oxidative metabolism, is produced exclusively in the cytosol and is imported in many organelles. Mitochondrial glutathione is required for the activity and stability of proteins containing iron-sulfur clusters, as well as erythropoiesis. The sequence is that of Mitochondrial glutathione transporter SLC25A39 from Mus musculus (Mouse).